The chain runs to 740 residues: Probable type IV piliation system protein DR_0774 (740 aa).

The first 20 residues, 1–20 (MNKRHALLLTAVLGMATAYA), serve as a signal peptide directing secretion.

This sequence belongs to the bacterial secretin family.

It is found in the cell envelope. In terms of biological role, could be part of the type IV piliation system (T4P). May contribute at the cohesion between the S-layer and the outer membrane by forming oligomers. Could also be the main channel through which trafficking is managed. The polypeptide is Probable type IV piliation system protein DR_0774 (Deinococcus radiodurans (strain ATCC 13939 / DSM 20539 / JCM 16871 / CCUG 27074 / LMG 4051 / NBRC 15346 / NCIMB 9279 / VKM B-1422 / R1)).